A 356-amino-acid chain; its full sequence is Heat-inducible transcription repressor HrcA (356 aa).

Belongs to the HrcA family.

Its function is as follows. Negative regulator of class I heat shock genes (grpE-dnaK-dnaJ and groELS operons). Prevents heat-shock induction of these operons. This Bartonella quintana (strain Toulouse) (Rochalimaea quintana) protein is Heat-inducible transcription repressor HrcA.